The following is a 303-amino-acid chain: Sporulation regulatory protein (303 aa).

The region spanning 26-213 (TGRLRAGLRK…HRVNDKQTAE (188 aa)) is the FtsK domain. 43–50 (GANHSGKS) lines the ATP pocket.

Its function is as follows. Involved in sporulation inhibition and pock formation. This chain is Sporulation regulatory protein (spi), found in Streptomyces azureus.